Here is a 206-residue protein sequence, read N- to C-terminus: Small ribosomal subunit protein uS4 (206 aa).

The 63-residue stretch at 96 to 158 (GRLDNVVYRM…AKQQSRIKAA (63 aa)) folds into the S4 RNA-binding domain.

The protein belongs to the universal ribosomal protein uS4 family. Part of the 30S ribosomal subunit. Contacts protein S5. The interaction surface between S4 and S5 is involved in control of translational fidelity.

Functionally, one of the primary rRNA binding proteins, it binds directly to 16S rRNA where it nucleates assembly of the body of the 30S subunit. In terms of biological role, with S5 and S12 plays an important role in translational accuracy. In Aliivibrio fischeri (strain ATCC 700601 / ES114) (Vibrio fischeri), this protein is Small ribosomal subunit protein uS4.